The following is a 256-amino-acid chain: Nuclear shuttle protein (256 aa).

A Bipartite nuclear localization signal motif is present at residues 21–42 (YQGFRRTAIVTRHDGKRRQHQS). Residues 81-96 (QLGKIEPNRCRSYIKL) carry the Nuclear localization signal motif. Residues 150–187 (ELFGARINSHGNLAVMPSLKDRFYIRHLLKRVLSVDKD) form an interaction with Arabidopsis thaliana NSI protein region.

Belongs to the begomovirus nuclear shuttle protein family. Binds to single-stranded and double-stranded viral DNA. Interacts with the host nuclear shuttle interacting (NSI) protein. This interaction may allow NSP to recruit NSI monomers to the viral genome and thus regulate nuclear export of viral genome by NSP.

Its subcellular location is the host nucleus. It localises to the host cytoplasm. The protein resides in the host cell membrane. In terms of biological role, binds to the genomic viral ssDNA, shuttles it into and out of the cell nucleus. Begomoviruses use 2 proteins to transport their DNA from cell to cell. The nuclear shuttle protein (NSP) shuttles it between nucleus and cytoplasm and the movement protein (MP) probably transports the DNA-NSP complex to the cell periphery and facilitates movement across the cell wall. In Macroptilium lathyroides (Lima bean), this protein is Nuclear shuttle protein.